Reading from the N-terminus, the 113-residue chain is MTKINENVAIQFVKGENEKDQPEIRLFRNLDGKNGKAVYKFYKPTTITLTNYKSVQRMFLIDSEGVLSTKKIDLSISEDHVKEVKSTYSWNSEEAFERFMRFASRYANSLSKN.

Belongs to the Psb28 family. Part of the photosystem II complex.

It is found in the cellular thylakoid membrane. This Prochlorococcus marinus (strain NATL1A) protein is Photosystem II reaction center Psb28 protein.